The chain runs to 120 residues: Anti-adapter protein IraM (120 aa).

Belongs to the IraM/RssC family.

The protein resides in the cytoplasm. In terms of biological role, involved in the stabilization of the sigma stress factor RpoS. In Salmonella typhimurium (strain LT2 / SGSC1412 / ATCC 700720), this protein is Anti-adapter protein IraM.